Consider the following 100-residue polypeptide: Large ribosomal subunit protein bL21 (100 aa).

Belongs to the bacterial ribosomal protein bL21 family. In terms of assembly, part of the 50S ribosomal subunit. Contacts protein L20.

This protein binds to 23S rRNA in the presence of protein L20. The sequence is that of Large ribosomal subunit protein bL21 from Mycoplasmoides gallisepticum (strain R(low / passage 15 / clone 2)) (Mycoplasma gallisepticum).